The sequence spans 167 residues: Plastocyanin major isoform, chloroplastic (167 aa).

The transit peptide at 1 to 52 (MASVTSATVAIPSFTGLKASTIKSSATVRIQTAAVASPKLTVKSSLKNFGVA) directs the protein to the chloroplast. A thylakoid-targeting transit peptide spans 53-68 (AVAAAASIALAGNAMA). A Plastocyanin-like domain is found at 69 to 167 (IEVLLGGGDG…AGMVGKVTVN (99 aa)). Cu cation is bound by residues H105, C152, H155, and M160.

This sequence belongs to the plastocyanin family. It depends on Cu(2+) as a cofactor.

It is found in the plastid. It localises to the chloroplast thylakoid membrane. Functionally, participates in electron transfer between P700 and the cytochrome b6-f complex in photosystem I. Seems to be the major plastocyanin in Arabidopsis. This Arabidopsis thaliana (Mouse-ear cress) protein is Plastocyanin major isoform, chloroplastic (DRT112).